Reading from the N-terminus, the 316-residue chain is Ribosomal RNA small subunit methyltransferase H (316 aa).

S-adenosyl-L-methionine contacts are provided by residues 35–37, Asp-55, Phe-84, Asp-105, and Gln-112; that span reads AGH.

This sequence belongs to the methyltransferase superfamily. RsmH family.

Its subcellular location is the cytoplasm. The enzyme catalyses cytidine(1402) in 16S rRNA + S-adenosyl-L-methionine = N(4)-methylcytidine(1402) in 16S rRNA + S-adenosyl-L-homocysteine + H(+). Functionally, specifically methylates the N4 position of cytidine in position 1402 (C1402) of 16S rRNA. This Streptococcus pneumoniae (strain P1031) protein is Ribosomal RNA small subunit methyltransferase H.